Reading from the N-terminus, the 184-residue chain is Photosystem I assembly protein Ycf4 (184 aa).

2 helical membrane-spanning segments follow: residues 19 to 39 (ISNF…VLVG) and 64 to 84 (LVMS…WCTI).

It belongs to the Ycf4 family.

The protein localises to the plastid. It localises to the chloroplast thylakoid membrane. Its function is as follows. Seems to be required for the assembly of the photosystem I complex. In Oenothera elata subsp. hookeri (Hooker's evening primrose), this protein is Photosystem I assembly protein Ycf4.